Here is a 196-residue protein sequence, read N- to C-terminus: APGW-amide-related neuropeptide (196 aa).

The N-terminal stretch at Met-1–Ser-22 is a signal peptide. A propeptide spanning residues Ser-23 to Asp-48 is cleaved from the precursor. Trp-54 bears the Tryptophan amide mark. The propeptide occupies Ser-58 to Asp-68. Residue Trp-74 is modified to Tryptophan amide. Positions Ser-78–Glu-88 are excised as a propeptide. Trp-94 is subject to Tryptophan amide. Positions Ser-98–Glu-105 are excised as a propeptide. Trp-111 is subject to Tryptophan amide. A propeptide spanning residues Ser-115–Val-129 is cleaved from the precursor. Tryptophan amide is present on Trp-135. Residues Ser-139–Ile-146 constitute a propeptide that is removed on maturation. Trp-151 and Trp-158 each carry tryptophan amide. A propeptide spanning residues Ser-162–Ile-196 is cleaved from the precursor.

In terms of tissue distribution, expressed in cerebral, pedal and visceral ganglia. TPGW-amide is found in pedal and cerebral ganglia and in shell adductor muscle (at protein level). RPGW-amide and KPGW-amide are found in pedal retractor muscle, ABRM and shell adductor muscle (at protein level).

RPGW-amide, KPGW-amide and TPGW-amide tetrapeptides are involved in control of muscle contraction and may function as neurotransmitters. These peptides increase tension of the pedal retractor muscle and, in conjunction with FMRF-amide, increase peak tension of the anterior byssus retractor muscle (ABRM). This chain is APGW-amide-related neuropeptide, found in Mytilus edulis (Blue mussel).